A 115-amino-acid polypeptide reads, in one-letter code: Aspartate 1-decarboxylase (115 aa).

Ser-25 functions as the Schiff-base intermediate with substrate; via pyruvic acid in the catalytic mechanism. The residue at position 25 (Ser-25) is a Pyruvic acid (Ser). Residue Thr-57 coordinates substrate. The Proton donor role is filled by Tyr-58. 73–75 contributes to the substrate binding site; that stretch reads GAA.

It belongs to the PanD family. Heterooctamer of four alpha and four beta subunits. The cofactor is pyruvate. Is synthesized initially as an inactive proenzyme, which is activated by self-cleavage at a specific serine bond to produce a beta-subunit with a hydroxyl group at its C-terminus and an alpha-subunit with a pyruvoyl group at its N-terminus.

The protein localises to the cytoplasm. The catalysed reaction is L-aspartate + H(+) = beta-alanine + CO2. It functions in the pathway cofactor biosynthesis; (R)-pantothenate biosynthesis; beta-alanine from L-aspartate: step 1/1. In terms of biological role, catalyzes the pyruvoyl-dependent decarboxylation of aspartate to produce beta-alanine. The chain is Aspartate 1-decarboxylase from Kosmotoga olearia (strain ATCC BAA-1733 / DSM 21960 / TBF 19.5.1).